The chain runs to 552 residues: MAYPERDLIVDPRSGFCKSNSTFYSKRNPLCLPPNPSLDVTTFISSQPQRGTTAFIDASTGHRLTFSDLWRVVDRVADCLYHEVGIRRGDVVLILSPNSIYIPVVCLSVMSLGAVVTTANTLNTSGEISKQIAQSNPTLVFTTSQLAPKLAAAISVVLTDEEDEKRVELTSGVRVVGILSEMMKKETSGQRVRDRVNQDDTAMMLYSSGTTGTSKGVISSHRNLTAYVAKYIDDKWKRDEIFVCTVPMFHSFGLLAFAMGSVASGSTVVILRRFGLDDMMQAVEKYKATILSLAPPVLVAMINGADQLKAKYDLTSLRKVRCGGAPLSKEVMDSFLEKYPTVNIFQGYALTESHGSGASTESVEESLKYGAVGLLSSGIEARIVDPDTGRVMGVNQPGELWLKGPSISKGYFGNEEATNETINLEGWLKLGDLCYIDEDGFLFVVDRLKELIKYKGYQVPPAELEALLIAHPHILDAAVIPFPDREAGQYPMAYVARKPESNLSEKEVIDFISNQVAPYKKIRKVAFISSIPKTASGKTLRKDLIKLSTSKL.

Positions 207, 208, 209, 210, 211, and 215 each coordinate ATP. (E)-4-coumaroyl-AMP is bound at residue F252. Position 273 (R273) interacts with CoA. The SBD1 stretch occupies residues 275-346 (GLDDMMQAVE…EKYPTVNIFQ (72 aa)). 4 residues coordinate (E)-4-coumaroyl-AMP: G324, Q346, G347, and T351. Q346, G347, T351, D432, and R447 together coordinate ATP. The SBD2 stretch occupies residues 347-411 (GYALTESHGS…LKGPSISKGY (65 aa)). (E)-4-coumaroyl-AMP contacts are provided by K449 and K453. The CoA site is built by K455 and G456. K538 contributes to the ATP binding site. The Microbody targeting signal motif lies at 550 to 552 (SKL).

It belongs to the ATP-dependent AMP-binding enzyme family. Mg(2+) is required as a cofactor.

The protein localises to the peroxisome. The catalysed reaction is (E)-4-coumarate + ATP + CoA = (E)-4-coumaroyl-CoA + AMP + diphosphate. It catalyses the reaction (E)-4-coumarate + ATP + H(+) = (E)-4-coumaroyl-AMP + diphosphate. It carries out the reaction (E)-4-coumaroyl-AMP + CoA = (E)-4-coumaroyl-CoA + AMP + H(+). Carboxylate--CoA ligase that may use 4-coumarate as substrate. Follows a two-step reaction mechanism, wherein the carboxylate substrate first undergoes adenylation by ATP, followed by a thioesterification in the presence of CoA to yield the final CoA thioester. In Arabidopsis thaliana (Mouse-ear cress), this protein is 4-coumarate--CoA ligase-like 3.